The chain runs to 264 residues: Flagellar brake protein YcgR 1 (264 aa).

Positions 132 to 249 constitute a PilZ domain; it reads QRREFFRLES…RLAMIERYIA (118 aa).

The protein belongs to the YcgR family. As to quaternary structure, monomer. Interacts with the flagellar basal bodies.

Its subcellular location is the bacterial flagellum basal body. Functionally, acts as a flagellar brake, regulating swimming and swarming in a bis-(3'-5') cyclic diguanylic acid (c-di-GMP)-dependent manner. Binds 1 c-di-GMP dimer per subunit. Increasing levels of c-di-GMP lead to decreased motility. This is Flagellar brake protein YcgR 1 from Dechloromonas aromatica (strain RCB).